The chain runs to 912 residues: Protein transport protein SEC24-2 (912 aa).

The span at 1–11 shows a compositional bias: basic residues; the sequence is MSNPSRPKKRV. 2 disordered regions span residues 1 to 83 and 102 to 129; these read MSNP…QQIS and PNAYYQPNNGNNIQPTGENKPSLTPGRP. Polar residues-rich tracts occupy residues 33–45, 53–74, and 106–129; these read SGQTMQSQVSGSA, GQFTQPMNASDAQNQPQFMTPA, and YQPNNGNNIQPTGENKPSLTPGRP. Zn(2+)-binding residues include cysteine 226, cysteine 229, cysteine 248, and cysteine 251. The interval 226-251 is zinc finger-like; sequence CRRCRGYLNPFVKILQVESKWRCNFC.

Belongs to the SEC23/SEC24 family. SEC24 subfamily. The COPII coat is composed of at least 5 proteins: the SEC23/24 complex, the SEC13/31 complex, and the protein SAR1. Golgi apparatus membrane; Peripheral membrane protein; Cytoplasmic side.

It is found in the cytoplasm. The protein localises to the cytoplasmic vesicle. It localises to the COPII-coated vesicle membrane. The protein resides in the endoplasmic reticulum membrane. Its subcellular location is the golgi apparatus membrane. Its function is as follows. Component of the coat protein complex II (COPII) which promotes the formation of transport vesicles from the endoplasmic reticulum (ER). The coat has two main functions, the physical deformation of the endoplasmic reticulum membrane into vesicles and the selection of cargo molecules. The sequence is that of Protein transport protein SEC24-2 (SEC242) from Naumovozyma castellii (Yeast).